The sequence spans 1693 residues: MTVMLSCLTQQQELLQSLADRVGQPAIQDNLYFCLAGQFTWVEDWYTTAIAGDVLIFDAGEKEQLARVLQQWEQFTGHVILITGLTEEPDPQTFLTQLALGKQQRCGERHFHWIVLVDPTIEEAFRGLQTFLDGKSHWLDLRLGVGDLEQCTDELWQCVWLEPSPLAPEKRQEMLVNLPHWLAEIVDQKQNLELEPISLLQAKLSLLQGLARESRGEMGRKQAQCHYRESLDVWELLGDTEAIIWLSLRLGYLFLLQAYGEKSRGHQLWQQTRNYAQTAIAALENQQWHFTHGETLNLLGEILRGLEDWEQLRQAAENSLIFFYQLSPFAATDTTPERNQEKLWTELELQGLISLAHSYLCEALVEQWKFDEGKEALKRAFETRPKQVEERDYRPCLANLHYLAGRVQLANDQIRESLMTLRQAQTLVSFEDNPRLYLAILVELRECYLQLEDWLAALAIDQEYQAREYRLGQRAFIGPKPLPCWPEQRICRHPLAPEKMLGGGAEARSAVQSKTMVSLTWQDLQKVWEQKPTPVLVLTGEPGVGKTSWLAGEVLQQMSPERVLLVDFTPHWAEKLWVHLGESFSLPSLGQATTPELVSALQALPILDLLLVLDGENGSLPWQKSPSLRQQELAQVLWQWLLTTSPSQGVRLLISVPPTAIADLYEELKGQLGEEHSLPPLQYQTLSPPTLGQAENWLTQAMAQCRHPWPPSLQSQFLGDLAMEGNGEQQPWLHPIDLQLLGTVLEQEQVTKSADYQGKKLDEWLTLAVQTYLAFLPPHLLKKALQLLKSLADGQQALCLKTEYQLLAALYSAPEPAADNPPEFAQEDIQQLQLLLTLLLRGRLIIVISQATLPYYRLSTTHLAHALQGKSAVISTPALINAGRRGSKSNPNLIAPSPGDRQQGNEDLIAELEAGSSAEEQVVAQKLKAAQLQYQKLVAGINLEKQCQFILKQFLVYPLEALLAAVKTGQDLQKLVTPETPLVQYPSLAPWLSLHSILARINECNRCHHEGPVTVLRISPSMENTPPLVLTATTNGIAYLWSFHGELINVLRGHQEAITALDWSADGQYFATASADHTVKLWQRHGEEVATLRGHEDWVRSVHFSPHHQFLVTSGQDNTARIWNFAGEQLTLCQGHADWVRNAEFNCHGQILLTASRDGTARLWDLEGREIGLCQGHTSWVRNAQFSPDGQWIVTCSADGTARLWDLSSQCFAVLKGHQNWVNNALWSPDGQHIITSSSDGTARVWSRHGKCLGTLRGHDHNIHGARFSLDGQKIVTYSTDNTARLWTKEGTLLTILRGHQKEVYDADFSADGRFVFTVSADQTARQWDISQKDTITLTGHSHWVRNAHFNPKGDRLLTVSRDKTARLWTTEGECVAVLADHQGWVREGQFSPDGQWIVTGSADKTAQLWNVLGKKLTVLRGHQDAVLNVRFSPDSQYIVTASKDGTARVWNNTGRELAVLRHYEKNIFAAEFSADGQFIVTASDDNTAGIWEIVGREVGICRGHEGPVYFAQFSADSRYILTASVDNTARIWDFLGRPLLTLAGHQSIVYQARFSPEGNLIATVSADHTARLWDRSGKTVAVLYGHQGLVGTVDWSPDGQMLVTASNDGTARLWDLSGRELLTLEGHGNWVRSAEFSPDGRWVLTSSADGTAKLWPVKTLPQLLSQGGQWLKNYLTHNALVSPADRPGAKVT.

WD repeat units follow at residues 1008–1042 (HHEG…YLWS), 1053–1083 (GHQE…KLWQ), 1094–1124 (GHED…RIWN), 1135–1165 (GHAD…RLWD), 1176–1206 (GHTS…RLWD), 1217–1247 (GHQN…RVWS), 1258–1288 (GHDH…RLWT), 1299–1329 (GHQK…RQWD), 1340–1370 (GHSH…RLWT), 1381–1411 (DHQG…QLWN), 1422–1452 (GHQD…RVWN), 1463–1493 (HYEK…GIWE), 1504–1534 (GHEG…RIWD), 1545–1575 (GHQS…RLWD), 1586–1616 (GHQG…RLWD), and 1627–1657 (GHGN…KLWP).

This is an uncharacterized protein from Synechocystis sp. (strain ATCC 27184 / PCC 6803 / Kazusa).